The sequence spans 814 residues: Testis-specific zinc finger protein topi (814 aa).

10 consecutive C2H2-type zinc fingers follow at residues 228-250 (NECT…MEKH), 275-297 (VKCN…GLIH), 360-382 (LQCE…SASH), 429-453 (FVCN…TSFH), 467-490 (LPCD…EEKH), 511-533 (YLCD…LRFH), 539-564 (FVCQ…RKCH), 570-592 (YLCL…RLIH), 598-620 (YECE…QRIH), and 626-649 (YSCL…RARH). Positions 669-705 (TAAAQKAQSHNPEQQDNDVAGGASTSDVPSGSGFMST) are disordered. Over residues 691-705 (ASTSDVPSGSGFMST) the composition is skewed to polar residues.

In terms of assembly, interacts with comr. As to expression, expressed in testis; primary spermatocytes.

Its subcellular location is the nucleus. Functionally, required for male meiotic division and spermatid differentiation. Required for accumulation of aly and comr on chromatin. May function as a transcription factor. The sequence is that of Testis-specific zinc finger protein topi (topi) from Drosophila melanogaster (Fruit fly).